The chain runs to 196 residues: Charged multivesicular body protein 1a (196 aa).

M1 is subject to N-acetylmethionine. Positions L5–V42 form a coiled coil. Phosphoserine is present on S101. Residues A102 to V124 are a coiled coil. Phosphoserine is present on S173. The short motif at D185–R195 is the MIT-interacting motif element.

This sequence belongs to the SNF7 family. As to quaternary structure, probable peripherally associated component of the endosomal sorting required for transport complex III (ESCRT-III). ESCRT-III components are thought to multimerize to form a flat lattice on the perimeter membrane of the endosome. Several assembly forms of ESCRT-III may exist that interact and act sequentially. Self-associates. Interacts with CHMP1B. Interacts with VPS4A. Interacts with VPS4B. Interacts with PHF1. Interacts with IST1. Interacts with MITD1. As to expression, highly expressed in adult heart, kidney and liver. Expressed at lower levels in adult colon, spleen, lung, brain, testis and muscle. Also expressed in myoblasts and embryo fibroblasts.

It is found in the cytoplasm. Its subcellular location is the endosome membrane. The protein resides in the nucleus matrix. Probable peripherally associated component of the endosomal sorting required for transport complex III (ESCRT-III) which is involved in multivesicular bodies (MVBs) formation and sorting of endosomal cargo proteins into MVBs. MVBs contain intraluminal vesicles (ILVs) that are generated by invagination and scission from the limiting membrane of the endosome and mostly are delivered to lysosomes enabling degradation of membrane proteins, such as stimulated growth factor receptors, lysosomal enzymes and lipids. The MVB pathway appears to require the sequential function of ESCRT-O, -I,-II and -III complexes. ESCRT-III proteins mostly dissociate from the invaginating membrane before the ILV is released. The ESCRT machinery also functions in topologically equivalent membrane fission events, such as the terminal stages of cytokinesis. ESCRT-III proteins are believed to mediate the necessary vesicle extrusion and/or membrane fission activities, possibly in conjunction with the AAA ATPase VPS4. Involved in cytokinesis. Involved in recruiting VPS4A and/or VPS4B to the midbody of dividing cells. May also be involved in chromosome condensation. Targets the Polycomb group (PcG) protein BMI1/PCGF4 to regions of condensed chromatin. May play a role in stable cell cycle progression and in PcG gene silencing. The chain is Charged multivesicular body protein 1a (Chmp1a) from Mus musculus (Mouse).